The sequence spans 155 residues: Fibroblast growth factor 1 (155 aa).

Ala-2 bears the N-acetylalanine mark. Positions 2–15 (AEGEITTFAALTER) are excised as a propeptide. Position 33 (Asn-33) interacts with heparin. The interval 127 to 143 (KKNGSCKRGPRTHYGQK) is heparin-binding.

This sequence belongs to the heparin-binding growth factors family. As to quaternary structure, monomer. Homodimer. Interacts with FGFR1, FGFR2, FGFR3 and FGFR4. Affinity between fibroblast growth factors (FGFs) and their receptors is increased by heparan sulfate glycosaminoglycans that function as coreceptors. Found in a complex with FGFBP1, FGF1 and FGF2. Interacts with FGFBP1. Part of a Cu(2+)-dependent multiprotein aggregate containing FGF1, S100A13 and SYT1. Interacts with SYT1. Interacts with S100A13. Interacts with LRRC59. Interacts with CSNKA, CSNKB and FIBP. While binding with LRRC59, CSNKA and FIBP seem mutually exclusive, CSNKB and FIBP may cooperatively interact with FGF1. Forms a ternary complex with FGFR1 and ITGAV:ITGB3 and induces the recruitment of PTPN11 to the complex. In the nucleus, phosphorylated by PKC/PRKCD.

It localises to the secreted. It is found in the cytoplasm. The protein localises to the cell cortex. Its subcellular location is the cytosol. The protein resides in the nucleus. Its function is as follows. Plays an important role in the regulation of cell survival, cell division, angiogenesis, cell differentiation and cell migration. Functions as a potent mitogen in vitro. Acts as a ligand for FGFR1 and integrins. Binds to FGFR1 in the presence of heparin leading to FGFR1 dimerization and activation via sequential autophosphorylation on tyrosine residues which act as docking sites for interacting proteins, leading to the activation of several signaling cascades. Binds to integrin ITGAV:ITGB3. Its binding to integrin, subsequent ternary complex formation with integrin and FGFR1, and the recruitment of PTPN11 to the complex are essential for FGF1 signaling. Induces the phosphorylation and activation of FGFR1, FRS2, MAPK3/ERK1, MAPK1/ERK2 and AKT1. Can induce angiogenesis. The sequence is that of Fibroblast growth factor 1 (Fgf1) from Mus musculus (Mouse).